The following is an 88-amino-acid chain: Small ribosomal subunit protein bS20 (88 aa).

Belongs to the bacterial ribosomal protein bS20 family.

In terms of biological role, binds directly to 16S ribosomal RNA. This Bartonella henselae (strain ATCC 49882 / DSM 28221 / CCUG 30454 / Houston 1) (Rochalimaea henselae) protein is Small ribosomal subunit protein bS20.